An 898-amino-acid chain; its full sequence is Eukaryotic translation initiation factor 3 subunit C (898 aa).

Residues 1–10 show a composition bias toward basic and acidic residues; sequence MSRFFHAKED. Disordered regions lie at residues 1–38 and 162–238; these read MSRFFHAKEDSDSDTSSSEDEVEDQKVNKSAKFRDDLD and VTDY…SVTK. Acidic residues predominate over residues 11–23; the sequence is SDSDTSSSEDEVE. A compositionally biased stretch (basic and acidic residues) spans 24–37; sequence DQKVNKSAKFRDDL. The span at 170–187 shows a compositional bias: acidic residues; it reads DEDGYETPEDEDDDDFGE. Residues 189–202 show a composition bias toward basic and acidic residues; sequence SESKAEKSPGKPSE. Positions 209-218 are enriched in acidic residues; the sequence is SDSDSDDDDS. The segment covering 219–228 has biased composition (low complexity); sequence SNWSSEPESN. Positions 630 to 806 constitute a PCI domain; the sequence is YHMHINVELM…DCLIMHRVEP (177 aa). A disordered region spans residues 829 to 898; it reads QILEPRTGRG…RRHPQKPRAF (70 aa). Basic and acidic residues-rich tracts occupy residues 850 to 859 and 866 to 878; these read RNERQGDKQK and GERRGGQGQDGKR. The segment covering 888–898 has biased composition (basic residues); that stretch reads QRRHPQKPRAF.

It belongs to the eIF-3 subunit C family. In terms of assembly, component of the eukaryotic translation initiation factor 3 (eIF-3) complex.

It is found in the cytoplasm. Functionally, component of the eukaryotic translation initiation factor 3 (eIF-3) complex, which is involved in protein synthesis of a specialized repertoire of mRNAs and, together with other initiation factors, stimulates binding of mRNA and methionyl-tRNAi to the 40S ribosome. The eIF-3 complex specifically targets and initiates translation of a subset of mRNAs involved in cell proliferation. The polypeptide is Eukaryotic translation initiation factor 3 subunit C (Caenorhabditis elegans).